The sequence spans 533 residues: D-3-phosphoglycerate dehydrogenase (533 aa).

Ala2 bears the N-acetylalanine mark. Ser14 is modified (phosphoserine). Lys21 is subject to N6-acetyllysine; alternate. Lys21 is covalently cross-linked (Glycyl lysine isopeptide (Lys-Gly) (interchain with G-Cter in SUMO1); alternate). A Glycyl lysine isopeptide (Lys-Gly) (interchain with G-Cter in SUMO2); alternate cross-link involves residue Lys21. Lys58 carries the post-translational modification N6-acetyllysine. Residues Thr78, 155-156 (RI), Asp175, Thr207, 234-236 (CAR), and Asp260 each bind NAD(+). Position 78 is a phosphothreonine (Thr78). Residue Arg236 is part of the active site. Glu265 is an active-site residue. Catalysis depends on His283, which acts as the Proton donor. 283 to 286 (HLGA) is a binding site for NAD(+).

It belongs to the D-isomer specific 2-hydroxyacid dehydrogenase family. In terms of assembly, homotetramer.

It catalyses the reaction (2R)-3-phosphoglycerate + NAD(+) = 3-phosphooxypyruvate + NADH + H(+). The catalysed reaction is (R)-2-hydroxyglutarate + NAD(+) = 2-oxoglutarate + NADH + H(+). It carries out the reaction (S)-malate + NAD(+) = oxaloacetate + NADH + H(+). Its pathway is amino-acid biosynthesis; L-serine biosynthesis; L-serine from 3-phospho-D-glycerate: step 1/3. Its function is as follows. Catalyzes the reversible oxidation of 3-phospho-D-glycerate to 3-phosphonooxypyruvate, the first step of the phosphorylated L-serine biosynthesis pathway. Also catalyzes the reversible oxidation of 2-hydroxyglutarate to 2-oxoglutarate and the reversible oxidation of (S)-malate to oxaloacetate. The chain is D-3-phosphoglycerate dehydrogenase (PHGDH) from Pan troglodytes (Chimpanzee).